A 303-amino-acid chain; its full sequence is Quinolinate synthase (303 aa).

Residues histidine 23 and serine 40 each contribute to the iminosuccinate site. [4Fe-4S] cluster is bound at residue cysteine 85. Residues 111–113 (YVN) and serine 128 contribute to the iminosuccinate site. Cysteine 171 is a binding site for [4Fe-4S] cluster. Residues 197-199 (HPE) and threonine 214 contribute to the iminosuccinate site. Cysteine 259 contacts [4Fe-4S] cluster.

This sequence belongs to the quinolinate synthase family. Type 2 subfamily. It depends on [4Fe-4S] cluster as a cofactor.

The protein resides in the cytoplasm. The enzyme catalyses iminosuccinate + dihydroxyacetone phosphate = quinolinate + phosphate + 2 H2O + H(+). The protein operates within cofactor biosynthesis; NAD(+) biosynthesis; quinolinate from iminoaspartate: step 1/1. In terms of biological role, catalyzes the condensation of iminoaspartate with dihydroxyacetone phosphate to form quinolinate. This chain is Quinolinate synthase, found in Thermodesulfovibrio yellowstonii (strain ATCC 51303 / DSM 11347 / YP87).